Consider the following 351-residue polypeptide: Cytoplasmic dynein 2 light intermediate chain 1 (351 aa).

Residues 304 to 351 (TLKDVKDPAKDPQYAESEVDEMRIQKDQELEQYKRSSSKSWKQIELDS) are disordered. The segment covering 323–337 (DEMRIQKDQELEQYK) has biased composition (basic and acidic residues).

Belongs to the dynein light intermediate chain family. In terms of assembly, light intermediate chain of the cytoplasmic dynein complex 2, a multisubunit complex composed at least of eleven different proteins. The cytoplasmic dynein 2 complex consists of two catalytic heavy chains (HCs) and a number of non-catalytic subunits presented by intermediate chains (ICs), light intermediate chains (LICs) and light chains (LCs). Among them, a heavy chain (DYNC2H1), two intermediate chains (DYNC2I2 and DYNC2I1), a light intermediate chain (DYNC2LI1), and a light chain (DYNLT2B) are unique to the dynein-2 complex, but a subset of light chains are also shared by dynein-1 and dynein-2 complexes. Dynein-2 complex is built around two copies of cytoplasmic dynein 2 heavy chain 1 (DYNC2H1). The C-terminal region forms the motor domain, which converts the energy from ATP hydrolysis into movement. Its N-terminal region forms the tail, an extended structure that binds the other subunits and holds the two heavy chains in a homodimer. Interacts with DYNC2H1 (via N-terminus); this interaction stabilizes the dynein-2 complex structure.

It is found in the cytoplasm. The protein resides in the cell projection. The protein localises to the cilium. Its subcellular location is the cytoskeleton. It localises to the cilium basal body. It is found in the cilium axoneme. The protein resides in the microtubule organizing center. The protein localises to the centrosome. Acts as one of several non-catalytic accessory components of the cytoplasmic dynein 2 complex (dynein-2 complex), a motor protein complex that drives the movement of cargos along microtubules within cilia and flagella in concert with the intraflagellar transport (IFT) system, facilitating the assembly of these organelles. Involved in the regulation of ciliary length. This Bos taurus (Bovine) protein is Cytoplasmic dynein 2 light intermediate chain 1 (DYNC2LI1).